Consider the following 147-residue polypeptide: Ribonuclease P protein component (147 aa).

Residues 117-147 are disordered; sequence TRPRGQSSHRTRASREATSAHTTAVGEQPTQ.

Belongs to the RnpA family. Consists of a catalytic RNA component (M1 or rnpB) and a protein subunit.

The catalysed reaction is Endonucleolytic cleavage of RNA, removing 5'-extranucleotides from tRNA precursor.. In terms of biological role, RNaseP catalyzes the removal of the 5'-leader sequence from pre-tRNA to produce the mature 5'-terminus. It can also cleave other RNA substrates such as 4.5S RNA. The protein component plays an auxiliary but essential role in vivo by binding to the 5'-leader sequence and broadening the substrate specificity of the ribozyme. The chain is Ribonuclease P protein component from Thermobifida fusca (strain YX).